A 351-amino-acid chain; its full sequence is Quinolinate phosphoribosyltransferase [decarboxylating] 2, mitochondrial (351 aa).

Substrate-binding positions include R142, 173–175 (TRK), R197, K207, E240, D267, 299–301 (SGN), and 320–322 (SGA).

Belongs to the NadC/ModD family.

The protein localises to the mitochondrion. It catalyses the reaction nicotinate beta-D-ribonucleotide + CO2 + diphosphate = quinolinate + 5-phospho-alpha-D-ribose 1-diphosphate + 2 H(+). It functions in the pathway alkaloid biosynthesis; nicotine biosynthesis. The protein operates within cofactor biosynthesis; NAD(+) biosynthesis; nicotinate D-ribonucleotide from quinolinate: step 1/1. In terms of biological role, involved in the biosynthesis of pyridine alkaloid natural products, leading mainly to the production of anabasine, anatabine, nicotine and nornicotine, effective deterrents against herbivores with antiparasitic and pesticide properties (neurotoxins); nornicotine serves as the precursor in the synthesis of the carcinogen compound N'-nitrosonornicotine (NNN). Involved in the catabolism of quinolinic acid (QA). This Nicotiana glauca (Glaucous tobacco) protein is Quinolinate phosphoribosyltransferase [decarboxylating] 2, mitochondrial.